A 100-amino-acid polypeptide reads, in one-letter code: Urease subunit gamma (100 aa).

This sequence belongs to the urease gamma subunit family. Heterotrimer of UreA (gamma), UreB (beta) and UreC (alpha) subunits. Three heterotrimers associate to form the active enzyme.

The protein resides in the cytoplasm. It catalyses the reaction urea + 2 H2O + H(+) = hydrogencarbonate + 2 NH4(+). The protein operates within nitrogen metabolism; urea degradation; CO(2) and NH(3) from urea (urease route): step 1/1. The polypeptide is Urease subunit gamma (Shewanella halifaxensis (strain HAW-EB4)).